Here is a 426-residue protein sequence, read N- to C-terminus: RuvB-like protein 1 (426 aa).

Residue 62-69 (GPVGSGKT) coordinates ATP.

This sequence belongs to the RuvB family. In terms of assembly, component of the SWR1 chromatin remodeling complex, the INO80 chromatin remodeling complex, and of the R2TP complex.

The protein resides in the nucleus. The catalysed reaction is ATP + H2O = ADP + phosphate + H(+). Functionally, DNA helicase which participates in several chromatin remodeling complexes, including the SWR1 and the INO80 complexes. The SWR1 complex mediates the ATP-dependent exchange of histone H2A for the H2A variant HZT1 leading to transcriptional regulation of selected genes by chromatin remodeling. The INO80 complex remodels chromatin by shifting nucleosomes and is involved in DNA repair. Also involved in pre-rRNA processing. The polypeptide is RuvB-like protein 1 (RVB1) (Encephalitozoon cuniculi (strain GB-M1) (Microsporidian parasite)).